We begin with the raw amino-acid sequence, 86 residues long: Sec-independent protein translocase protein TatA (86 aa).

A helical transmembrane segment spans residues 3–23 (IFGVGLPEVTVILILALLIFG). Residues 56 to 86 (MNEEDESPKSIESNQTNEINQEKIDSENSKK) form a disordered region. Polar residues predominate over residues 65–74 (SIESNQTNEI). Residues 75–86 (NQEKIDSENSKK) are compositionally biased toward basic and acidic residues.

Belongs to the TatA/E family. Forms a complex with TatC.

Its subcellular location is the cell inner membrane. Part of the twin-arginine translocation (Tat) system that transports large folded proteins containing a characteristic twin-arginine motif in their signal peptide across membranes. TatA could form the protein-conducting channel of the Tat system. This chain is Sec-independent protein translocase protein TatA, found in Prochlorococcus marinus (strain MIT 9215).